We begin with the raw amino-acid sequence, 183 residues long: Large ribosomal subunit protein bL25 (183 aa).

Belongs to the bacterial ribosomal protein bL25 family. CTC subfamily. In terms of assembly, part of the 50S ribosomal subunit; part of the 5S rRNA/L5/L18/L25 subcomplex. Contacts the 5S rRNA. Binds to the 5S rRNA independently of L5 and L18.

Its function is as follows. This is one of the proteins that binds to the 5S RNA in the ribosome where it forms part of the central protuberance. In Desulfotalea psychrophila (strain LSv54 / DSM 12343), this protein is Large ribosomal subunit protein bL25.